The sequence spans 765 residues: Complement factor B (765 aa).

The signal sequence occupies residues 1–25; the sequence is MGSNRCPRLGLVPLILGLLSGGVSM. Sushi domains lie at 35-100, 101-160, and 163-220; these read SPCS…ECKA, IRCP…ICDD, and GYCP…SCQD. Cystine bridges form between C37-C76, C62-C98, C103-C145, C131-C158, C165-C205, and C191-C218. N-linked (GlcNAc...) asparagine glycans are attached at residues N122 and N142. One can recognise a VWFA domain in the interval 270 to 469; the sequence is NIYLVLDGSD…NLEDVFFQML (200 aa). S278 and S280 together coordinate Mg(2+). N285 carries N-linked (GlcNAc...) asparagine glycosylation. T353 lines the Mg(2+) pocket. N-linked (GlcNAc...) asparagine glycosylation is present at N378. The Peptidase S1 domain occupies 477-758; that stretch reads LCGMVWEHKD…VLPWLKEKLK (282 aa). 5 disulfide bridges follow: C478/C596, C511/C527, C599/C615, C660/C686, and C699/C729. Catalysis depends on charge relay system residues H526 and D576. The active-site Charge relay system is S703.

This sequence belongs to the peptidase S1 family. Monomer. Interacts with complement C3b; this interaction is dependent on the presence of Mg(2+). In terms of assembly, catalytic component of the C3 convertase of the alternative complement pathway, also named C3bBb, composed of complement factor B Bb and complement C3b. Catalytic component of the C5 convertase of the alternative complement pathway, also named C3bBb3b, composed of complement factor B Bb and additional molecules of complement C3b. Interacts to CFP; this interaction contributes to the stabilization of the active C3-convertase enzyme complex. The cofactor is Mg(2+). Mn(2+) serves as cofactor. Cleaved by CFD following activation of the alternative complement system, generating Ba and Bb chains. Cleavage and activation takes place when CFB is already associated with complement C3b.

Its subcellular location is the secreted. The protein localises to the cell surface. The catalysed reaction is Cleavage of Arg-|-Ser bond in complement component C3 alpha-chain to yield C3a and C3b, and Arg-|-Xaa bond in complement component C5 alpha-chain to yield C5a and C5b.. In terms of biological role, precursor of the catalytic component of the C3 and C5 convertase complexes of the alternative pathway of the complement system, a cascade of proteins that leads to phagocytosis and breakdown of pathogens and signaling that strengthens the adaptive immune system. The alternative complement pathway acts as an amplification loop that enhances other complement pathways (classical, lectin and GZMK) by promoting formation of additional C3 and C5 convertases. CFB is cleaved and activated by CFD to generate Ba and Bb chains; Bb chain constituting the catalytic component of the C3 and C5 convertases. Serine protease component of the complement C3 and C5 convertase complexes of the alternative complement pathway. Following cleavage and activation by factor D (CFD), forms the C3 convertase together with complement C3b. As part of the C3 convertase, cleaves and activates C3 into C3a anaphylatoxin and C3b opsonin, the next components of the complement pathways. When an additional complement C3b molecule binds to the C3 convertase, forms the C5 convertase, which cleaves and activates C5 into C5a anaphylatoxin and C5b component of the membrane attack complex. Its function is as follows. Involved in proliferation and differentiation of preactivated B-lymphocytes, rapid spreading of peripheral blood monocytes, stimulation of lymphocyte blastogenesis and lysis of erythrocytes. The sequence is that of Complement factor B (CFB) from Sus scrofa (Pig).